The following is a 524-amino-acid chain: MKFNVLSLFAPWAKMDERNFKDQEKEDLVSITAPKLDDGAREFEVSSNEAASPYNAAFQTIFGSYEPGMKTTRELIDTYRNLMNNYEVDNAVSEIVSDAIVYEDDTEVVALNLDKSKFSPKIKNMMLDEFSDVLNHLSFQRKGSDHFRRWYVDSRIFFHKIIDPKRPKEGIKELRRLDPRQVQYVREIITETEAGTKIVKGYKEYFIYDTAHESYACDGRMYEAGTKIKIPKAAVVYAHSGLVDCCGKNIIGYLHRAVKPANQLKLLEDAVVIYRITRAPDRRVWYVDTGNMPARKAAEHMQHVMNTMKNRVVYDASTGKIKNQQHNMSMTEDYWLQRRDGKAVTEVDTLPGADNTGNMEDIRWFRQALYMALRVPLSRIPQDQQGGVMFDSGTSITRDELTFAKFIRELQHKFEEVFLDPLKTNLLLKGIITEDEWNDEINNIKIEFHRDSYFAELKEAEILERRINMLTMAEPFIGKYISHRTAMKDILQMTDEEIEQEAKQIEEESKEARFQDPDQEQEDF.

Residues 486–516 (AMKDILQMTDEEIEQEAKQIEEESKEARFQD) are a coiled coil. Over residues 500-516 (QEAKQIEEESKEARFQD) the composition is skewed to basic and acidic residues. The segment at 500–524 (QEAKQIEEESKEARFQDPDQEQEDF) is disordered.

This sequence belongs to the Tevenvirinae portal protein family. In terms of assembly, homododecamer. Interacts with the large terminase subunit. Interacts with the major capsid protein. Interacts with the capsid vertex protein.

The protein resides in the virion. It is found in the host cell inner membrane. In terms of biological role, forms the portal vertex of the capsid. This portal plays critical roles in head assembly, genome packaging, neck/tail attachment, and genome ejection. The portal protein multimerizes as a single ring-shaped homododecamer arranged around a central channel. Binds to the terminase subunits to form the packaging machine. Attaches to the host inner membrane most likely through interaction with host yidC and forms together with chaperone gp40 an initiator complex to form the prohead. The sequence is that of Portal protein (20) from Enterobacteria phage T4 (Bacteriophage T4).